We begin with the raw amino-acid sequence, 230 residues long: Lecithin retinol acyltransferase (230 aa).

The Cytoplasmic segment spans residues 1–194 (MKNPMLEVVS…VKIIIRDQRS (194 aa)). In terms of domain architecture, LRAT spans 50–177 (VLEVPRTHLT…CRYGTPISPQ (128 aa)). Active-site residues include H60 and H72. The Acyl-thioester intermediate role is filled by C161. The helical transmembrane segment at 195–215 (VLASAVLGLASIVCTGLVSYT) threads the bilayer. Topologically, residues 216-230 (TLPAIFIPFFLWMAG) are lumenal.

Belongs to the H-rev107 family. Hepatic stellate cells and endothelial cells (at protein level). Found at high levels in testis and liver, followed by retinal pigment epithelium, small intestine, prostate, pancreas and colon. Low expression observed in brain. In fetal tissues, expressed in retinal pigment epithelium and liver, and barely in the brain.

The protein resides in the endoplasmic reticulum membrane. It localises to the rough endoplasmic reticulum. Its subcellular location is the endosome. The protein localises to the multivesicular body. It is found in the cytoplasm. The protein resides in the perinuclear region. The catalysed reaction is all-trans-retinol--[retinol-binding protein] + a 1,2-diacyl-sn-glycero-3-phosphocholine = apo--[retinol-binding protein] + an all-trans-retinyl ester + a 2-acyl-sn-glycero-3-phosphocholine. It carries out the reaction 1,2-dihexadecanoyl-sn-glycero-3-phosphocholine + all-trans-retinol = all-trans-retinyl hexadecanoate + 2-hexadecanoyl-sn-glycero-3-phosphocholine. It catalyses the reaction 1,2-diheptanoyl-sn-glycero-3-phosphocholine + all-trans-retinol--[retinol-binding protein] = all-trans-retinyl heptanoate + 2-heptanoyl-sn-glycero-3-phosphocholine + apo--[retinol-binding protein]. The enzyme catalyses 1,2-dioctanoyl-sn-glycero-3-phosphocholine + all-trans-retinol--[retinol-binding protein] = 2-octanoyl-sn-glycero-3-phosphocholine + all-trans-retinyl octanoate + apo--[retinol-binding protein]. The catalysed reaction is all-trans-retinol--[retinol-binding protein] + 1,2-dihexadecanoyl-sn-glycero-3-phosphocholine = apo--[retinol-binding protein] + all-trans-retinyl hexadecanoate + 2-hexadecanoyl-sn-glycero-3-phosphocholine. It carries out the reaction 1,2-didodecanoyl-sn-glycero-3-phosphocholine + all-trans-retinol--[retinol-binding protein] = 2-dodecanoyl-sn-glycero-3-phosphocholine + all-trans-retinyl dodecanoate + apo--[retinol-binding protein]. The protein operates within cofactor metabolism; retinol metabolism. With respect to regulation, inhibited by all-trans-retinyl alpha-bromoacetate and N-boc-L-biocytinyl-11-aminoundecane chloro-methyl ketone (BACMK). Transfers the acyl group from the sn-1 position of phosphatidylcholine to all-trans retinol, producing all-trans retinyl esters. Retinyl esters are storage forms of vitamin A. LRAT plays a critical role in vision. It provides the all-trans retinyl ester substrates for the isomerohydrolase which processes the esters into 11-cis-retinol in the retinal pigment epithelium; due to a membrane-associated alcohol dehydrogenase, 11 cis-retinol is oxidized and converted into 11-cis-retinaldehyde which is the chromophore for rhodopsin and the cone photopigments. Required for the survival of cone photoreceptors and correct rod photoreceptor cell morphology. In Homo sapiens (Human), this protein is Lecithin retinol acyltransferase.